Here is a 421-residue protein sequence, read N- to C-terminus: Histidine--tRNA ligase (421 aa).

It belongs to the class-II aminoacyl-tRNA synthetase family. In terms of assembly, homodimer.

Its subcellular location is the cytoplasm. The enzyme catalyses tRNA(His) + L-histidine + ATP = L-histidyl-tRNA(His) + AMP + diphosphate + H(+). This chain is Histidine--tRNA ligase, found in Coxiella burnetii (strain Dugway 5J108-111).